Reading from the N-terminus, the 131-residue chain is Large ribosomal subunit protein bL12 (131 aa).

Belongs to the bacterial ribosomal protein bL12 family. As to quaternary structure, homodimer. Part of the ribosomal stalk of the 50S ribosomal subunit. Forms a multimeric L10(L12)X complex, where L10 forms an elongated spine to which 2 to 4 L12 dimers bind in a sequential fashion. Binds GTP-bound translation factors.

In terms of biological role, forms part of the ribosomal stalk which helps the ribosome interact with GTP-bound translation factors. Is thus essential for accurate translation. The sequence is that of Large ribosomal subunit protein bL12 from Prochlorococcus marinus (strain NATL2A).